The sequence spans 132 residues: Small heat shock protein hspL (132 aa).

A sHSP domain is found at 15–131 (TFTNFVSAPV…VKMSNNNKVE (117 aa)).

It belongs to the small heat shock protein (HSP20) family.

The sequence is that of Small heat shock protein hspL (hspL) from Dictyostelium discoideum (Social amoeba).